The chain runs to 371 residues: S-adenosylmethionine:tRNA ribosyltransferase-isomerase (371 aa).

The protein belongs to the QueA family. Monomer.

The protein localises to the cytoplasm. It catalyses the reaction 7-aminomethyl-7-carbaguanosine(34) in tRNA + S-adenosyl-L-methionine = epoxyqueuosine(34) in tRNA + adenine + L-methionine + 2 H(+). The protein operates within tRNA modification; tRNA-queuosine biosynthesis. Its function is as follows. Transfers and isomerizes the ribose moiety from AdoMet to the 7-aminomethyl group of 7-deazaguanine (preQ1-tRNA) to give epoxyqueuosine (oQ-tRNA). This is S-adenosylmethionine:tRNA ribosyltransferase-isomerase from Prochlorococcus marinus (strain MIT 9313).